The primary structure comprises 417 residues: Solanesyl diphosphate synthase 2, chloroplastic (417 aa).

Residues 1–60 (MMMSCRNIDLGTSVLDHSCSSSSTSRRFLFGNSSKTVCMIGGRSCVGNLVFLRRDLATCR) constitute a chloroplast transit peptide. Positions 137, 140, and 175 each coordinate isopentenyl diphosphate. Mg(2+)-binding residues include D182 and D186. R191 provides a ligand contact to an all-trans-polyprenyl diphosphate. An isopentenyl diphosphate-binding site is contributed by R192. 4 residues coordinate an all-trans-polyprenyl diphosphate: K268, T269, Q306, and K323.

This sequence belongs to the FPP/GGPP synthase family. Homodimer. Interacts with FBN5. Mg(2+) serves as cofactor. In terms of tissue distribution, higher expression in leaves than in roots.

It is found in the plastid. The protein localises to the chloroplast. It catalyses the reaction 5 isopentenyl diphosphate + (2E,6E,10E)-geranylgeranyl diphosphate = all-trans-nonaprenyl diphosphate + 5 diphosphate. Functionally, involved in providing solanesyl diphosphate for plastoquinone-9 (PQ-9) formation in plastids. Catalyzes the elongation of the prenyl side chain of PQ-9 in plastids. Contributes to the biosynthesis of plastochromanol-8 (PC-8) in plastids. Does not contribute to the synthesis of tocopherol or ubiquinone. PQ-9 and PC-8 are lipophilic antioxidants that act as protectant against photooxidative stress under high light stress conditions. Prefers geranylgeranyl diphosphate to farnesyl diphosphate as substrate. No activity with geranyl diphosphate or dimethylallyl diphosphate as substrate. The chain is Solanesyl diphosphate synthase 2, chloroplastic from Arabidopsis thaliana (Mouse-ear cress).